The chain runs to 237 residues: Proteasome subunit alpha type-5 (237 aa).

It belongs to the peptidase T1A family. The 26S proteasome consists of a 20S proteasome core and two 19S regulatory subunits. The 20S proteasome core is composed of 28 subunits that are arranged in four stacked rings, resulting in a barrel-shaped structure. The two end rings are each formed by seven alpha subunits, and the two central rings are each formed by seven beta subunits. The catalytic chamber with the active sites is on the inside of the barrel.

The protein localises to the cytoplasm. It is found in the nucleus. In terms of biological role, the proteasome is a multicatalytic proteinase complex which is characterized by its ability to cleave peptides with Arg, Phe, Tyr, Leu, and Glu adjacent to the leaving group at neutral or slightly basic pH. The proteasome has an ATP-dependent proteolytic activity. This Oryza sativa subsp. japonica (Rice) protein is Proteasome subunit alpha type-5 (PAE1).